A 1912-amino-acid polypeptide reads, in one-letter code: Chromodomain-helicase-DNA-binding protein 4 (1912 aa).

Positions 1-157 (MASGLGSPSP…PKSSAQLLED (157 aa)) are disordered. Acidic residues predominate over residues 35-45 (NEEDPEEDLSE). Position 44 is a phosphoserine (S44). The segment covering 113–131 (GKKKKKKLGPKKEKKSKSK) has biased composition (basic residues). K133 participates in a covalent cross-link: Glycyl lysine isopeptide (Lys-Gly) (interchain with G-Cter in SUMO2). The span at 135 to 145 (EEEEEDDDDDS) shows a compositional bias: acidic residues. Glycyl lysine isopeptide (Lys-Gly) (interchain with G-Cter in SUMO2) cross-links involve residues K146, K179, and K297. Residues 243–360 (ATEVAPPPPP…KKKKGEEEVT (118 aa)) form a disordered region. A KIKL motif is present at residues 295-298 (KIKL). S303 carries the post-translational modification Phosphoserine. Residue K304 forms a Glycyl lysine isopeptide (Lys-Gly) (interchain with G-Cter in SUMO2) linkage. S308, S309, S310, and S319 each carry phosphoserine. Positions 311 to 323 (EDDDLDVESDFDD) are enriched in acidic residues. Residues 340–353 (SRSRKKLRTTKKKK) show a composition bias toward basic residues. T367 carries the post-translational modification Phosphothreonine. The PHD-type 1 zinc-finger motif lies at 370-417 (QDYCEVCQQGGEIILCDTCPRAYHMVCLDPDMEKAPEGKWSCPHCEKE). Position 428 is a phosphoserine (S428). The PHD-type 2 zinc finger occupies 449 to 496 (MEFCRVCKDGGELLCCDTCPSSYHIHCLNPPLPEIPNGEWLCPRCTCP). Residues 494–594 (TCPALKGKVQ…SGDFGGDEEK (101 aa)) enclose the Chromo 1 domain. 2 disordered regions span residues 510-537 (WGQPPSPTPVPRPPDADPNTPSPKPLEG) and 578-603 (NDMDEPPSGDFGGDEEKSRKRKNKDP). Pro residues predominate over residues 513–522 (PPSPTPVPRP). Phosphoserine is present on S515. A phosphothreonine mark is found at T517 and T529. S531 bears the Phosphoserine mark. Residues K618 and K696 each participate in a glycyl lysine isopeptide (Lys-Gly) (interchain with G-Cter in SUMO2) cross-link. Residues 622–697 (MMIHRILNHS…KLKKVKLRKL (76 aa)) enclose the Chromo 2 domain. T703 is modified (phosphothreonine). Residue K711 forms a Glycyl lysine isopeptide (Lys-Gly) (interchain with G-Cter in SUMO1); alternate linkage. K711 participates in a covalent cross-link: Glycyl lysine isopeptide (Lys-Gly) (interchain with G-Cter in SUMO2); alternate. The region spanning 738–922 (RFSWAQGTDT…FHLLNFLTPE (185 aa)) is the Helicase ATP-binding domain. ATP is bound at residue 751 to 758 (DEMGLGKT). The short motif at 873–876 (DEAH) is the DEAH box element. Positions 1054–1203 (LLQKMLKNLK…LTHLVVRPGL (150 aa)) constitute a Helicase C-terminal domain. At S1209 the chain carries Phosphoserine. Glycyl lysine isopeptide (Lys-Gly) (interchain with G-Cter in SUMO2) cross-links involve residues K1212, K1228, K1239, and K1304. 3 positions are modified to phosphoserine: S1308, S1349, and S1370. 2 disordered regions span residues 1344-1401 (NYND…KPLP) and 1525-1562 (EENKKMSQPGSPSPKTPTPSTPGDTQPNTPAPVPPAED). Residues K1528 and K1529 each participate in a glycyl lysine isopeptide (Lys-Gly) (interchain with G-Cter in SUMO2) cross-link. Phosphoserine is present on residues S1531, S1535, and S1537. Pro residues predominate over residues 1535–1544 (SPSPKTPTPS). 3 positions are modified to phosphothreonine: T1542, T1549, and T1553. Residue K1565 forms a Glycyl lysine isopeptide (Lys-Gly) (interchain with G-Cter in SUMO2) linkage. Residue S1570 is modified to Phosphoserine. A compositionally biased stretch (basic and acidic residues) spans 1570 to 1584 (SLKEEESIEGEKEVK). Disordered regions lie at residues 1570–1589 (SLKEEESIEGEKEVKSTAPE) and 1594–1644 (CTQA…VEKV). K1572 is covalently cross-linked (Glycyl lysine isopeptide (Lys-Gly) (interchain with G-Cter in SUMO2)). The residue at position 1576 (S1576) is a Phosphoserine. A required for interaction with PCNT region spans residues 1577-1912 (IEGEKEVKST…PTPQQVAQQQ (336 aa)). Residue K1584 forms a Glycyl lysine isopeptide (Lys-Gly) (interchain with G-Cter in SUMO2) linkage. S1602 carries the phosphoserine modification. Residues 1603–1644 (EDEKVVVEPPEGEEKVEKAEVKERTEEPMETEPKGAADVEKV) are compositionally biased toward basic and acidic residues. Glycyl lysine isopeptide (Lys-Gly) (interchain with G-Cter in SUMO2) cross-links involve residues K1606, K1617, and K1636. K1643 participates in a covalent cross-link: Glycyl lysine isopeptide (Lys-Gly) (interchain with G-Cter in SUMO2); alternate. K1643 is modified (N6-acetyllysine; alternate). K1647 is covalently cross-linked (Glycyl lysine isopeptide (Lys-Gly) (interchain with G-Cter in SUMO2)). T1653 carries the post-translational modification Phosphothreonine. Glycyl lysine isopeptide (Lys-Gly) (interchain with G-Cter in SUMO2) cross-links involve residues K1660 and K1670. T1679 is modified (phosphothreonine). Glycyl lysine isopeptide (Lys-Gly) (interchain with G-Cter in SUMO2) cross-links involve residues K1687 and K1865.

This sequence belongs to the SNF2/RAD54 helicase family. In terms of assembly, component of the nucleosome remodeling and deacetylase (NuRD) repressor complex, composed of core proteins MTA1, MTA2, MTA3, RBBP4, RBBP7, HDAC1, HDAC2, MBD2, MBD3, and peripherally associated proteins CDK2AP1, CDK2AP2, GATAD2A, GATAD2B, CHD3, CHD4 and CHD5. The exact stoichiometry of the NuRD complex is unknown, and some subunits such as MBD2 and MBD3, GATAD2A and GATAD2B, and CHD3, CHD4 and CHD5 define mutually exclusive NuRD complexes. Interacts with IKFZ1; the interaction is direct and when in part of the NuRD complex. Part of a complex containing ATR and HDAC2. Interacts with HDAC2; the interaction is direct. Interacts with the cohesin complex component RAD21; the interaction is direct. Interacts with the ISWI chromatin remodeling complex component SMARCA5; the interaction is direct. Interacts with ZGPAT; the interaction is direct. Interacts with ZMYND8; the interaction is direct, appears to occur with monomeric ZMYND8, and is increased following DNA damage. Interacts with BCL6. Interacts with BRD4. Interacts with CBX1. Interacts with CBX3. Interacts with CBX5. Interacts with GATAD2A. Interacts with HDAC1. Interacts with KLF1; the interaction depends on sumoylation of KLF1, and leads to its transcriptional repression. Interacts with MTA1. Interacts with PCNT. Interacts with RBBP7. Interacts with SETX. Interacts with TRIM27. Interacts with histone H3. Interacts with histone H4. Does not interact with PWWP2A. Does not interact with PWWP2B. Interacts (via KIKL motif) with BRD3 (via NET domain). The cofactor is Zn(2+). Widely expressed.

The protein resides in the nucleus. It localises to the cytoplasm. It is found in the cytoskeleton. The protein localises to the microtubule organizing center. Its subcellular location is the centrosome. It carries out the reaction ATP + H2O = ADP + phosphate + H(+). ATP-dependent chromatin-remodeling factor that binds and distorts nucleosomal DNA. Acts as a component of the histone deacetylase NuRD complex which participates in the remodeling of chromatin. Localizes to acetylated damaged chromatin in a ZMYND8-dependent manner, to promote transcriptional repression and double-strand break repair by homologous recombination. Involved in neurogenesis. In Homo sapiens (Human), this protein is Chromodomain-helicase-DNA-binding protein 4 (CHD4).